The chain runs to 457 residues: Argininosuccinate lyase (457 aa).

It belongs to the lyase 1 family. Argininosuccinate lyase subfamily.

The protein resides in the cytoplasm. It carries out the reaction 2-(N(omega)-L-arginino)succinate = fumarate + L-arginine. The protein operates within amino-acid biosynthesis; L-arginine biosynthesis; L-arginine from L-ornithine and carbamoyl phosphate: step 3/3. In Klebsiella pneumoniae (strain 342), this protein is Argininosuccinate lyase.